Here is a 414-residue protein sequence, read N- to C-terminus: Translation initiation factor 2 subunit gamma (414 aa).

Residues Gln7 to Asp204 enclose the tr-type G domain. Positions Gly16–Thr23 are G1. Mg(2+) contacts are provided by Asp19, Thr23, Gly44, and Ser46. Residue Asp19–Thr24 participates in GTP binding. Residues Gly44–Arg48 form a G2 region. Residues Asp91 to Gly94 form a G3 region. GTP-binding positions include Asn147–Asp150 and Ser182–Glu184. The interval Asn147–Asp150 is G4. The tract at residues Ser182–Glu184 is G5.

It belongs to the TRAFAC class translation factor GTPase superfamily. Classic translation factor GTPase family. EIF2G subfamily. As to quaternary structure, heterotrimer composed of an alpha, a beta and a gamma chain. It depends on Mg(2+) as a cofactor.

It carries out the reaction GTP + H2O = GDP + phosphate + H(+). EIF-2 functions in the early steps of protein synthesis by forming a ternary complex with GTP and initiator tRNA. This is Translation initiation factor 2 subunit gamma from Halobacterium salinarum (strain ATCC 29341 / DSM 671 / R1).